A 296-amino-acid polypeptide reads, in one-letter code: Putative thiosulfate sulfurtransferase SseA (296 aa).

Rhodanese domains follow at residues 31–138 (GKPG…DTSL) and 168–286 (ILGT…VPIT). Residue C245 is the Cysteine persulfide intermediate of the active site. Residue R250 participates in substrate binding.

It carries out the reaction thiosulfate + hydrogen cyanide = thiocyanate + sulfite + 2 H(+). The polypeptide is Putative thiosulfate sulfurtransferase SseA (sseA) (Mycobacterium leprae (strain TN)).